A 409-amino-acid polypeptide reads, in one-letter code: Tetracenomycin polyketide synthase ketoacyl synthase beta subunit (409 aa).

Positions 4-407 (PAPVVVTGLG…GFNSALVVRR (404 aa)) constitute a Ketosynthase family 3 (KS3) domain.

It belongs to the thiolase-like superfamily. Beta-ketoacyl-ACP synthases family. As to quaternary structure, the tetracenomycin polyketide synthase (TCM PKS) is composed of a ketosynthase complex (TcmKL), an acyl carrier protein (TcmM), a cyclase (TcmN) and a probable second cyclase (TcmJ). TcmK and TcmL form a heterodimeric complex.

It catalyses the reaction 10 malonyl-CoA + 8 H(+) = tetracenomycin F2 + 10 CO2 + 10 CoA + 2 H2O. It participates in antibiotic biosynthesis; tetracenomycin C biosynthesis. In terms of biological role, involved in the biosynthesis of tetracenomycin C (TCM C). Part of a type II polyketide synthase (PKS) that catalyzes the synthesis of tetracenomycin F2 (TCM F2), a precursor of TCM C, from malonyl-CoA. TcmK and TcmL form a heterodimeric alpha-beta complex that catalyzes the condensation reactions between the growing acyl-enzyme chain and the malonyl-CoA extender units. The polypeptide is Tetracenomycin polyketide synthase ketoacyl synthase beta subunit (Streptomyces glaucescens).